We begin with the raw amino-acid sequence, 179 residues long: Orotate phosphoribosyltransferase (179 aa).

5-phospho-alpha-D-ribose 1-diphosphate contacts are provided by residues Arg94, Lys95, Lys98, His100, and 120–128; that span reads EDTSTTGNS. 2 residues coordinate orotate: Thr124 and Arg152.

The protein belongs to the purine/pyrimidine phosphoribosyltransferase family. PyrE subfamily. Homodimer. Requires Mg(2+) as cofactor.

It carries out the reaction orotidine 5'-phosphate + diphosphate = orotate + 5-phospho-alpha-D-ribose 1-diphosphate. It participates in pyrimidine metabolism; UMP biosynthesis via de novo pathway; UMP from orotate: step 1/2. In terms of biological role, catalyzes the transfer of a ribosyl phosphate group from 5-phosphoribose 1-diphosphate to orotate, leading to the formation of orotidine monophosphate (OMP). The protein is Orotate phosphoribosyltransferase of Mycobacterium bovis (strain ATCC BAA-935 / AF2122/97).